The chain runs to 494 residues: Argininosuccinate synthase, chloroplastic (494 aa).

A chloroplast-targeting transit peptide spans 1-73 (MAEISATSFP…SRSCKNQAIR (73 aa)). Ala-74 is modified (N-acetylalanine). ATP contacts are provided by residues 102 to 110 (AYSGGLDTS) and Ala-129. Tyr-181 and Ser-186 together coordinate L-citrulline. Position 211 (Gly-211) interacts with ATP. L-aspartate-binding residues include Thr-213, Asn-217, and Asp-218. Asn-217 is an L-citrulline binding site. Positions 221, 270, 279, 355, and 367 each coordinate L-citrulline.

The protein belongs to the argininosuccinate synthase family. Type 1 subfamily. In terms of assembly, homotetramer.

It is found in the plastid. The protein resides in the chloroplast. The enzyme catalyses L-citrulline + L-aspartate + ATP = 2-(N(omega)-L-arginino)succinate + AMP + diphosphate + H(+). The protein operates within amino-acid biosynthesis; L-arginine biosynthesis; L-arginine from L-ornithine and carbamoyl phosphate: step 2/3. This chain is Argininosuccinate synthase, chloroplastic, found in Arabidopsis thaliana (Mouse-ear cress).